We begin with the raw amino-acid sequence, 352 residues long: N-acetyl-gamma-glutamyl-phosphate reductase (352 aa).

C155 is a catalytic residue.

The protein belongs to the NAGSA dehydrogenase family. Type 1 subfamily.

Its subcellular location is the cytoplasm. It catalyses the reaction N-acetyl-L-glutamate 5-semialdehyde + phosphate + NADP(+) = N-acetyl-L-glutamyl 5-phosphate + NADPH + H(+). It functions in the pathway amino-acid biosynthesis; L-arginine biosynthesis; N(2)-acetyl-L-ornithine from L-glutamate: step 3/4. In terms of biological role, catalyzes the NADPH-dependent reduction of N-acetyl-5-glutamyl phosphate to yield N-acetyl-L-glutamate 5-semialdehyde. The polypeptide is N-acetyl-gamma-glutamyl-phosphate reductase (Picosynechococcus sp. (strain ATCC 27264 / PCC 7002 / PR-6) (Agmenellum quadruplicatum)).